A 141-amino-acid polypeptide reads, in one-letter code: Large ribosomal subunit protein uL11 (141 aa).

Belongs to the universal ribosomal protein uL11 family. Part of the ribosomal stalk of the 50S ribosomal subunit. Interacts with L10 and the large rRNA to form the base of the stalk. L10 forms an elongated spine to which L12 dimers bind in a sequential fashion forming a multimeric L10(L12)X complex. One or more lysine residues are methylated.

Its function is as follows. Forms part of the ribosomal stalk which helps the ribosome interact with GTP-bound translation factors. The polypeptide is Large ribosomal subunit protein uL11 (Gloeothece citriformis (strain PCC 7424) (Cyanothece sp. (strain PCC 7424))).